A 609-amino-acid chain; its full sequence is UvrABC system protein C (609 aa).

A GIY-YIG domain is found at 16-94 (SSAGVYRMYD…IKQYMPRYNV (79 aa)). In terms of domain architecture, UVR spans 203 to 238 (QQVIATLVGKMEQAAMDLNYEDAARYRDQISALRRV).

This sequence belongs to the UvrC family. In terms of assembly, interacts with UvrB in an incision complex.

It is found in the cytoplasm. The UvrABC repair system catalyzes the recognition and processing of DNA lesions. UvrC both incises the 5' and 3' sides of the lesion. The N-terminal half is responsible for the 3' incision and the C-terminal half is responsible for the 5' incision. The protein is UvrABC system protein C of Shewanella loihica (strain ATCC BAA-1088 / PV-4).